The chain runs to 229 residues: Putative N-acetylmannosamine-6-phosphate 2-epimerase (229 aa).

It belongs to the NanE family.

It carries out the reaction an N-acyl-D-glucosamine 6-phosphate = an N-acyl-D-mannosamine 6-phosphate. The protein operates within amino-sugar metabolism; N-acetylneuraminate degradation; D-fructose 6-phosphate from N-acetylneuraminate: step 3/5. Converts N-acetylmannosamine-6-phosphate (ManNAc-6-P) to N-acetylglucosamine-6-phosphate (GlcNAc-6-P). This is Putative N-acetylmannosamine-6-phosphate 2-epimerase from Escherichia fergusonii (strain ATCC 35469 / DSM 13698 / CCUG 18766 / IAM 14443 / JCM 21226 / LMG 7866 / NBRC 102419 / NCTC 12128 / CDC 0568-73).